The sequence spans 997 residues: Kinesin-like protein KIF19 (997 aa).

Positions glutamine 11 to isoleucine 346 constitute a Kinesin motor domain. Glycine 104 to threonine 111 serves as a coordination point for ATP. Positions histidine 360–leucine 437 form a coiled coil. Positions arginine 468–aspartate 491 are enriched in basic and acidic residues. Residues arginine 468–proline 503 are disordered. A coiled-coil region spans residues alanine 508 to glutamine 577. Disordered regions lie at residues asparagine 662–isoleucine 690, glycine 792–glutamate 811, and glycine 848–phenylalanine 890. 2 stretches are compositionally biased toward basic and acidic residues: residues glycine 792–serine 802 and glutamine 869–valine 880. Positions histidine 861 to serine 889 form a coiled coil.

This sequence belongs to the TRAFAC class myosin-kinesin ATPase superfamily. Kinesin family.

It localises to the cytoplasm. The protein localises to the cytoskeleton. The protein resides in the cell projection. Its subcellular location is the cilium. In terms of biological role, plus end-directed microtubule-dependent motor protein that regulates the length of motile cilia by mediating depolymerization of microtubules at ciliary tips. The polypeptide is Kinesin-like protein KIF19 (kif19) (Xenopus laevis (African clawed frog)).